A 241-amino-acid polypeptide reads, in one-letter code: MAWQMTQLLLLALVAAAWGAQAPRTPRARTDLLNVCMDAKHHKAEPGPEDSLHEQCSPWRKNACCSVNTSIEAHKDISYLYRFNWDHCGKMEPACKRHFIQDTCLYECSPNLGPWIREVNQRWRKERVLGVPLCKEDCQSWWEDCRTSYTCKSNWHKGWNWTSGYNQCPVKAACHRFDFYFPTPAALCNEIWSHSYKVSNYSRGSGRCIQMWFDPFQGNPNEEVARFYAENPTSGSTPQGI.

A signal peptide spans 1 to 19 (MAWQMTQLLLLALVAAAWG). Cystine bridges form between C36/C64, C56/C104, C65/C108, C88/C174, C95/C145, C134/C208, C138/C188, and C151/C168. An N-linked (GlcNAc...) asparagine glycan is attached at N68. Folate-binding positions include D102, Y106, 123 to 127 (WRKER), 156 to 161 (HKGWNW), and S195. N-linked (GlcNAc...) asparagine glycosylation occurs at N160. S234 carries the GPI-anchor amidated serine lipid modification. Positions 235–241 (GSTPQGI) are cleaved as a propeptide — removed in mature form.

The protein belongs to the folate receptor family. In terms of processing, the secreted form is derived from the membrane-bound form either by cleavage of the GPI anchor, or/and by proteolysis catalyzed by a metalloprotease. In terms of tissue distribution, detected in milk (at protein level).

It localises to the cell membrane. The protein localises to the apical cell membrane. Its subcellular location is the basolateral cell membrane. The protein resides in the secreted. It is found in the cytoplasmic vesicle. It localises to the clathrin-coated vesicle. The protein localises to the endosome. Functionally, binds to folate and reduced folic acid derivatives and mediates delivery of 5-methyltetrahydrofolate and folate analogs into the interior of cells. Has high affinity for folate and folic acid analogs at neutral pH. Exposure to slightly acidic pH after receptor endocytosis triggers a conformation change that strongly reduces its affinity for folates and mediates their release. Required for normal embryonic development and normal cell proliferation. The sequence is that of Folate receptor alpha (FOLR1) from Bos taurus (Bovine).